Reading from the N-terminus, the 217-residue chain is Phosphatase MT3486 (217 aa).

D9 functions as the Nucleophile in the catalytic mechanism.

It belongs to the HAD-like hydrolase superfamily.

Functionally, able to hydrolyze geranyl diphosphate (GPP), farnesyl diphosphate (FPP) and geranylgeranyl diphosphate (GGPP) to respectively yield geraniol, farnesol and geranylgeraniol. The chain is Phosphatase MT3486 from Mycobacterium tuberculosis (strain CDC 1551 / Oshkosh).